The following is a 714-amino-acid chain: Fatty acid oxidation complex subunit alpha (714 aa).

The tract at residues 1-190 (MEMASAFTLN…KLGLVDDVVP (190 aa)) is enoyl-CoA hydratase. A 3-hydroxyacyl-CoA dehydrogenase region spans residues 306–714 (APLNSVGILG…FWKTTATDLQ (409 aa)).

It in the N-terminal section; belongs to the enoyl-CoA hydratase/isomerase family. In the central section; belongs to the 3-hydroxyacyl-CoA dehydrogenase family. As to quaternary structure, heterotetramer of two alpha chains (FadJ) and two beta chains (FadI).

The protein resides in the cytoplasm. The enzyme catalyses a (3S)-3-hydroxyacyl-CoA = a (2E)-enoyl-CoA + H2O. It carries out the reaction a 4-saturated-(3S)-3-hydroxyacyl-CoA = a (3E)-enoyl-CoA + H2O. It catalyses the reaction a (3S)-3-hydroxyacyl-CoA + NAD(+) = a 3-oxoacyl-CoA + NADH + H(+). The catalysed reaction is (3S)-3-hydroxybutanoyl-CoA = (3R)-3-hydroxybutanoyl-CoA. The protein operates within lipid metabolism; fatty acid beta-oxidation. Catalyzes the formation of a hydroxyacyl-CoA by addition of water on enoyl-CoA. Also exhibits 3-hydroxyacyl-CoA epimerase and 3-hydroxyacyl-CoA dehydrogenase activities. This chain is Fatty acid oxidation complex subunit alpha, found in Escherichia coli O17:K52:H18 (strain UMN026 / ExPEC).